A 237-amino-acid chain; its full sequence is Lectin ConGF (237 aa).

Residues Glu8 and Asp10 each coordinate Mn(2+). Residues Asp10, Tyr12, Asn14, and Asp19 each contribute to the Ca(2+) site. Asn14 is a binding site for a carbohydrate. Mn(2+) is bound by residues Asp19 and His24. A carbohydrate is bound by residues Leu99, Tyr100, Asp208, and Arg228.

The protein belongs to the leguminous lectin family. Homotetramer; dimer of dimers. Concanavalin A-like lectins of the Diocleinae subtribe undergo proteolytic processing referred to as circular permutation. The propeptide is split into an N-terminal and a C-terminal part, the gamma and beta chain, respectively. These are then religated in beta-gamma order to form the mature alpha chain. The beta and gamma chains can often be detected in cell extracts. Residues 1-118 of the mature chain, as displayed here, probably constitute the beta chain in the propeptide, residues 119-237 the gamma chain.

Its function is as follows. Lectin. Induces paw edema in mice. Has a weak vasorelaxant effect on rat aorta. Has anti-inflammatory and anti-nociceptive effects. The sequence is that of Lectin ConGF from Canavalia grandiflora (Jackbean).